A 129-amino-acid polypeptide reads, in one-letter code: Small ribosomal subunit protein uS11 (129 aa).

Belongs to the universal ribosomal protein uS11 family. In terms of assembly, part of the 30S ribosomal subunit. Interacts with proteins S7 and S18. Binds to IF-3.

Functionally, located on the platform of the 30S subunit, it bridges several disparate RNA helices of the 16S rRNA. Forms part of the Shine-Dalgarno cleft in the 70S ribosome. In Bacillus cytotoxicus (strain DSM 22905 / CIP 110041 / 391-98 / NVH 391-98), this protein is Small ribosomal subunit protein uS11.